Here is a 506-residue protein sequence, read N- to C-terminus: Histidine--tRNA ligase (506 aa).

Belongs to the class-II aminoacyl-tRNA synthetase family. In terms of assembly, homodimer.

The protein localises to the cytoplasm. The catalysed reaction is tRNA(His) + L-histidine + ATP = L-histidyl-tRNA(His) + AMP + diphosphate + H(+). The protein is Histidine--tRNA ligase (hisS) of Bradyrhizobium diazoefficiens (strain JCM 10833 / BCRC 13528 / IAM 13628 / NBRC 14792 / USDA 110).